A 545-amino-acid polypeptide reads, in one-letter code: Glucose-6-phosphate isomerase (545 aa).

The active-site Proton donor is glutamate 351. Residues histidine 382 and lysine 510 contribute to the active site.

The protein belongs to the GPI family.

It is found in the cytoplasm. It catalyses the reaction alpha-D-glucose 6-phosphate = beta-D-fructose 6-phosphate. It participates in carbohydrate biosynthesis; gluconeogenesis. Its pathway is carbohydrate degradation; glycolysis; D-glyceraldehyde 3-phosphate and glycerone phosphate from D-glucose: step 2/4. Its function is as follows. Catalyzes the reversible isomerization of glucose-6-phosphate to fructose-6-phosphate. In Shewanella baltica (strain OS195), this protein is Glucose-6-phosphate isomerase.